The following is a 406-amino-acid chain: Kelch domain-containing protein 2 (406 aa).

6 Kelch repeats span residues 31–85 (ERSG…NTEG), 92–136 (SGSC…ERID), 148–207 (LGVW…IWSQ), 221–259 (HACA…NELI), 271–311 (HSLT…IKFN), and 322–359 (HTAC…IFSV).

In terms of assembly, component of a CRL2(KLHDC2) E3 ubiquitin-protein ligase complex, also named ECS(KLHDC2) complex, composed of CUL2, Elongin BC (ELOB and ELOC), RBX1 and substrate-specific adapter KLHDC2. May form oligomers as a KLHDC2-ELOB-ELOC complex; this interaction is autoinhibitory for the E3 ligase complex as the substrate-binding site of KLHDC2 is blocked in the oligomer. Interacts with CREB3; interaction is direct and specific as it does not interact with CREB1, ATF4, ATF6, JUN, FOS, CEBPA or herpes simplex virus transactivator VP16. Post-translationally, autoubiquitinated by the CRL2(KLHDC2) E3 ligase complex.

It localises to the nucleus. Its pathway is protein modification; protein ubiquitination. Substrate-recognition component of a Cul2-RING (CRL2) E3 ubiquitin-protein ligase complex of the DesCEND (destruction via C-end degrons) pathway, which recognizes a C-degron located at the extreme C terminus of target proteins, leading to their ubiquitination and degradation. The C-degron recognized by the DesCEND pathway is usually a motif of less than ten residues and can be present in full-length proteins, truncated proteins or proteolytically cleaved forms. The CRL2(KLHDC2) complex specifically recognizes proteins with a diglycine (Gly-Gly) at the C-terminus, leading to their ubiquitination and degradation. The CRL2(KLHDC2) complex mediates ubiquitination and degradation of truncated SELENOK and SELENOS selenoproteins produced by failed UGA/Sec decoding, which end with a diglycine. The CRL2(KLHDC2) complex also recognizes proteolytically cleaved proteins ending with Gly-Gly, such as the N-terminal fragment of USP1, leading to their degradation. May also act as an indirect repressor of CREB3-mediated transcription by interfering with CREB3-DNA-binding. The sequence is that of Kelch domain-containing protein 2 from Bos taurus (Bovine).